The chain runs to 621 residues: Uptake hydrogenase large subunit (621 aa).

Residues C75, C78, C600, and C603 each contribute to the Ni(2+) site.

This sequence belongs to the [NiFe]/[NiFeSe] hydrogenase large subunit family. As to quaternary structure, heterodimer of a large and a small subunit. Ni(2+) is required as a cofactor.

It is found in the cell membrane. It catalyses the reaction H2 + A = AH2. This enzyme recycles the H(2) produced by nitrogenase to increase the production of ATP and to protect nitrogenase against inhibition or damage by O(2) under carbon- or phosphate-limited conditions. The polypeptide is Uptake hydrogenase large subunit (hupL) (Alcaligenes hydrogenophilus).